A 644-amino-acid polypeptide reads, in one-letter code: Exoribonuclease 2 (644 aa).

The 328-residue stretch at 189–516 folds into the RNB domain; sequence RQDLTALNFV…NHRLLKAVIK (328 aa). In terms of domain architecture, S1 motif spans 561-643; it reads NTRFAAEIID…ETRSIIARPA (83 aa).

The protein belongs to the RNR ribonuclease family. RNase II subfamily.

It localises to the cytoplasm. The catalysed reaction is Exonucleolytic cleavage in the 3'- to 5'-direction to yield nucleoside 5'-phosphates.. Involved in mRNA degradation. Hydrolyzes single-stranded polyribonucleotides processively in the 3' to 5' direction. The sequence is that of Exoribonuclease 2 from Salmonella paratyphi A (strain ATCC 9150 / SARB42).